Consider the following 489-residue polypeptide: Probable guanine deaminase (489 aa).

Positions 100 and 102 each coordinate Zn(2+). Residues 102 to 105 (HVSQ), 231 to 232 (RF), 258 to 261 (HLSE), and Asp-348 each bind substrate. Residues His-258 and Asp-348 each contribute to the Zn(2+) site.

Belongs to the metallo-dependent hydrolases superfamily. ATZ/TRZ family. Requires Zn(2+) as cofactor.

The protein localises to the cytoplasm. The enzyme catalyses guanine + H2O + H(+) = xanthine + NH4(+). Its pathway is purine metabolism; guanine degradation; xanthine from guanine: step 1/1. In terms of biological role, catalyzes the hydrolytic deamination of guanine, producing xanthine and ammonia. In Saccharomyces cerevisiae (strain ATCC 204508 / S288c) (Baker's yeast), this protein is Probable guanine deaminase (GUD1).